Consider the following 505-residue polypeptide: Peroxisome proliferator-activated receptor gamma (505 aa).

Threonine 84 is a glycosylation site (O-linked (GlcNAc) threonine). Phosphoserine is present on serine 112. Residues 136–210 constitute a DNA-binding region (nuclear receptor); it reads AIECRVCGDK…VGMSHNAIRF (75 aa). 2 NR C4-type zinc fingers span residues 139 to 159 and 176 to 198; these read CRVC…CEGC and CDLN…FQKC. Residues 205–280 are interaction with FAM120B; it reads HNAIRFGRMP…DKSPFVIYDM (76 aa). Positions 238–503 constitute an NR LBD domain; it reads DLRALAKHLY…HPLLQEIYKD (266 aa). Lysine 252 is covalently cross-linked (Glycyl lysine isopeptide (Lys-Gly) (interchain with G-Cter in ubiquitin)). Rosiglitazone contacts are provided by residues 314 to 317, histidine 351, histidine 477, and tyrosine 501; that span reads QFRS. A 9aaTAD motif is present at residues 495–503; it reads PLLQEIYKD.

Belongs to the nuclear hormone receptor family. NR1 subfamily. As to quaternary structure, interacts with FOXO1 (acetylated form). Heterodimer with other nuclear receptors, such as RXRA. The heterodimer with the retinoic acid receptor RXRA is called adipocyte-specific transcription factor ARF6. Interacts with NCOA6 coactivator, leading to a strong increase in transcription of target genes. Interacts with coactivator PPARBP, leading to a mild increase in transcription of target genes. Interacts with NOCA7 in a ligand-inducible manner. Interacts with NCOA1 and NCOA2 LXXLL motifs. Interacts with ASXL1, ASXL2, DNTTIP2, FAM120B, MAP2K1/MEK1, NR0B2, PDPK1, PRDM16, PRMT2 and TGFB1I1. Interacts (when activated by agonist) with PPP5C. Interacts with HELZ2 and THRAP3; the interaction stimulates the transcriptional activity of PPARG. Interacts with PER2, the interaction is ligand dependent and blocks PPARG recruitment to target promoters. Interacts with NOCT. Interacts with ACTN4. Interacts (when in the liganded conformation) with GPS2. Interacts with CRY1 and CRY2 in a ligand-dependent manner. In the absence of hormonal ligand, interacts with TACC1. In macrophages, interacts with PAQR3 and STUB1; the interactions promote PPARG poylubiquitination and STUB1-mediated degradation. O-GlcNAcylation at Thr-84 reduces transcriptional activity in adipocytes. In terms of processing, phosphorylated in basal conditions and dephosphorylated when treated with the ligand. May be dephosphorylated by PPP5C. The phosphorylated form may be inactive and dephosphorylation at Ser-112 induces adipogenic activity. Post-translationally, ubiquitinated by E3 ubiquitin-protein ligase complex containing FBXO9; leading to proteasomal degradation. Ubiquitinated at Lys-252 by TRIM55 leading to proteasomal degradation. Ubiquitinated by E3 ubiquitin-protein ligase STUB1/CHIP; leading to proteasomal degradation. Highest expression in adipose tissue. Lower in skeletal muscle, spleen, heart and liver. Also detectable in placenta, lung and ovary.

Its subcellular location is the nucleus. It localises to the cytoplasm. Its activity is regulated as follows. PDPK1 activates its transcriptional activity independently of its kinase activity. Its function is as follows. Nuclear receptor that binds peroxisome proliferators such as hypolipidemic drugs and fatty acids. Once activated by a ligand, the nuclear receptor binds to DNA specific PPAR response elements (PPRE) and modulates the transcription of its target genes, such as acyl-CoA oxidase. It therefore controls the peroxisomal beta-oxidation pathway of fatty acids. Key regulator of adipocyte differentiation and glucose homeostasis. ARF6 acts as a key regulator of the tissue-specific adipocyte P2 (aP2) enhancer. Acts as a critical regulator of gut homeostasis by suppressing NF-kappa-B-mediated pro-inflammatory responses. Plays a role in the regulation of cardiovascular circadian rhythms by regulating the transcription of BMAL1 in the blood vessels. Functionally, (Microbial infection) Upon treatment with M.tuberculosis or its lipoprotein LpqH, phosphorylation of MAPK p38 and IL-6 production are modulated, probably via this protein. In Homo sapiens (Human), this protein is Peroxisome proliferator-activated receptor gamma (PPARG).